A 245-amino-acid chain; its full sequence is uncharacterized protein (245 aa).

This is an uncharacterized protein from Frog virus 3 (isolate Goorha) (FV-3).